We begin with the raw amino-acid sequence, 469 residues long: Transcriptional coactivator YAP1 (469 aa).

Residues 1–21 are compositionally biased toward pro residues; that stretch reads MEPAQQPPPQPAPQGPAPPSV. Positions 1–47 are disordered; it reads MEPAQQPPPQPAPQGPAPPSVSPAGTPAAPPAPPAGHQVVHVRGDSE. Ser-46 carries the phosphoserine modification. Thr-48 bears the Phosphothreonine mark. Residues 71-85 adopt a coiled-coil conformation; that stretch reads MRLRKLPDSFFKPPE. Residue Lys-75 is modified to N6-lactoyllysine. Residues 76-99 are disordered; it reads LPDSFFKPPEPKSHSRQASTDAGT. Ser-90 and Ser-94 each carry phosphoserine. Thr-95 and Thr-104 each carry phosphothreonine. A Phosphoserine; by LATS1 and LATS2 modification is found at Ser-112. A phosphoserine mark is found at Ser-113 and Ser-116. Thr-136 carries the phosphothreonine; by MAPK8 and MAPK9 modification. Ser-146 carries the phosphoserine; by LATS1 and LATS2 modification. WW domains are found at residues 153 to 186 and 212 to 245; these read VPLP…DPRK and GPLP…DPRL. The interval 258–290 is disordered; that stretch reads SAPVKQPPPLAPQSPQGGVLGGGSSNQQQQIQL. 2 positions are modified to phosphoserine: Ser-271 and Ser-320. The segment at 273–469 is transactivation domain; it reads QGGVLGGGSS…LDKESFLTWL (197 aa). Positions 280–325 form a coiled coil; sequence GSSNQQQQIQLQQLQMEKERLRLKQQELFRQELALRSQLPSLEQDG. Ser-333 carries the post-translational modification Phosphoserine; by MAPK8 and MAPK9. Positions 345 to 357 are enriched in polar residues; the sequence is TNSSDPFLNSGTY. The tract at residues 345–405 is disordered; sequence TNSSDPFLNS…SQSTLPSQQS (61 aa). Phosphoserine occurs at positions 347, 348, and 354. Ser-363 is modified (phosphoserine; by LATS1 and LATS2). Residues 365 to 375 are compositionally biased toward polar residues; sequence DSGLSMSSYSI. Phosphoserine; by CK1 occurs at positions 366 and 369. Tyr-373 is modified (phosphotyrosine; by ABL1). Thr-378 is modified (phosphothreonine; by MAPK8 and MAPK9). Residues 393–405 show a composition bias toward polar residues; the sequence is DTISQSTLPSQQS.

It belongs to the YAP1 family. Part of a complex when phosphorylated that contains DSG3, PKP1, YAP1 and YWHAG; the complex is required for localization of DSG3 and YAP1 to the cell membrane in keratinocytes. Binds to the SH3 domain of the YES kinase. Binds to WBP1 and WBP2. Binds, in vitro, through the WW1 domain, to neural isoforms of ENAH that contain the PPSY motif. The phosphorylated form interacts with YWHAB. Interacts (via WW domains) with LATS1 (via PPxY motif 2). Interacts with LATS2. Interacts (via WW domain 1) with ERBB4 (via PPxY motif 2). Interacts with TEAD1, TEAD2, TEAD3 and TEAD4. Interacts with TP73. Interacts with RUNX1. Interacts with HCK. Interacts (via WW domains) with PTPN14 (via PPxY motif 2); this interaction leads to the cytoplasmic sequestration of YAP1 and inhibits its transcriptional coactivator activity. Interacts (when phosphorylated at Ser-112) with SMAD2, SMAD3 and WWTR1. Interacts with PRRG2 (via cytoplasmic domain). Interacts (via WW domains) with PRRG4 (via cytoplasmic domain). Interacts (phosphorylated) with CLDN18; the interaction sequesters YAP1 away from the nucleus and thereby restricts transcription of YAP1 target genes. Interacts with SMAD1. Interacts with AMOT; the interaction facilitates translocation of YAP1 to the cytoplasm and tight junctions. Interacts with AMOTL2, the interaction is required for ubiquitination of AMOTL2 and localization of YAP1 to tight junctions. Post-translationally, phosphorylated by LATS1 and LATS2; leading to cytoplasmic translocation and inactivation. Phosphorylated by ABL1; leading to YAP1 stabilization, enhanced interaction with TP73 and recruitment onto proapoptotic genes; in response to DNA damage. Phosphorylation at Ser-366 and Ser-369 by CK1 is triggered by previous phosphorylation at Ser-363 by LATS proteins and leads to YAP1 ubiquitination by SCF(beta-TRCP) E3 ubiquitin ligase and subsequent degradation. Phosphorylated at Thr-104, Thr-136, Ser-333 and Thr-378 by MAPK8/JNK1 and MAPK9/JNK2, which is required for the regulation of apoptosis by YAP1. Lactylation by AARS1 promotes nuclear localization and stabilization of YAP1, leading to increased Hippo signaling pathway. Delactylated by SIRT1. In terms of processing, ubiquitinated by SCF(beta-TRCP) E3 ubiquitin ligase. In terms of tissue distribution, highly specific to cortical neurons.

The protein resides in the cytoplasm. Its subcellular location is the nucleus. It is found in the cell junction. The protein localises to the tight junction. It localises to the cell membrane. Its function is as follows. Transcriptional regulator with dual roles as a coactivator and corepressor. Critical downstream regulatory target in the Hippo signaling pathway, crucial for organ size control and tumor suppression by restricting proliferation and promoting apoptosis. The Hippo signaling pathway core involves a kinase cascade featuring STK3/MST2 and STK4/MST1, along with its regulatory partner SAV1, which phosphorylates and activates LATS1/2 in complex with their regulatory protein, MOB1. This activation leads to the phosphorylation and inactivation of the YAP1 oncoprotein and WWTR1/TAZ. Phosphorylation of YAP1 by LATS1/2 prevents its nuclear translocation, thereby regulating the expression of its target genes. The transcriptional regulation of gene expression requires TEAD transcription factors and modulates cell growth, anchorage-independent growth, and induction of epithelial-mesenchymal transition (EMT). Plays a key role in tissue tension and 3D tissue shape by regulating the cortical actomyosin network, acting via ARHGAP18, a Rho GTPase activating protein that suppresses F-actin polymerization. It also suppresses ciliogenesis by acting as a transcriptional corepressor of TEAD4 target genes AURKA and PLK1. In conjunction with WWTR1, regulates TGFB1-dependent SMAD2 and SMAD3 nuclear accumulation. Synergizes with WBP2 to enhance PGR activity. Attenuates p73-mediated cell death signaling in transcriptional repression-induced atypical death (TRIAD) of neurons. In Rattus norvegicus (Rat), this protein is Transcriptional coactivator YAP1 (Yap1).